Here is a 325-residue protein sequence, read N- to C-terminus: Secreted RxLR effector protein RXLR-C07 (325 aa).

The signal sequence occupies residues M1–A19. TPR repeat units lie at residues R37–R75, A92–I125, G134–G167, A218–R251, and A260–I293. A RxLR-dEER motif is present at residues R37–R75.

Belongs to the RxLR effector family.

It is found in the secreted. Its subcellular location is the host cytoplasm. The protein resides in the host nucleus. The protein localises to the host nucleolus. In terms of biological role, secreted effector that suppresses pattern-triggered immunity (PTI) in plant host. The chain is Secreted RxLR effector protein RXLR-C07 from Plasmopara halstedii (Downy mildew of sunflower).